The chain runs to 601 residues: MATPEPAESDAEWEQLEPGQRNLYKDTKLETCSNPASMGNQDPKQGLVSKLDGEEERWSSVRANKNSSSSLHRLKKTGTSAKVQQDGAQTEGKQKFQRKLTSEVTFRKKSSNSKKSSECTLLEKKNVHSKHDPSEKRLHKSNLYGKNLNQNLDLPSQIKISAKKKPDTANEYRKSLSHSASDVNRDEISTRKKCDKSPNNKLFGKGDKNQTGKKCEKVCRHTASHTKEDKIHTGEKRKSPCRSPSKSDKAPGSGKPYECNQCGKVLSHKQGLLDHQRTHAGEEPYECYECGIAFSQKSHLVVHQKTPTGEKAPYECVQCGKAHGHKHALTDHLRISHTGEKPYKCNECGKTFRHSSNLMQHIRSHTGEKPYECKECGKSFRYNSSFTEHVRTHTGEIPYECNECGKAFKYGSSLTKHMRIHTGEKPFECTECGKTFSKKSHLVIHQRTHTKEKPYKCKECGKAFGHSSSLTYHMRTHTGDCPFECNKCGKAFKQIEGLTQHQRVHTGEKPYECVECGKAFSQKSHLIVHQRTHTGEKPFECYECGKAFNAKSQLVIHQRSHTGEKPYKPYECVECGKAFKQNASLTRHMKTHSEEQSQEED.

Residues 1–70 (MATPEPAESD…VRANKNSSSS (70 aa)) enclose the KRAB domain. Residue Thr-3 is modified to Phosphothreonine. The residue at position 9 (Ser-9) is a Phosphoserine. Residues 30–43 (ETCSNPASMGNQDP) show a composition bias toward polar residues. The interval 30–254 (ETCSNPASMG…SKSDKAPGSG (225 aa)) is disordered. Over residues 60–70 (SVRANKNSSSS) the composition is skewed to low complexity. The segment covering 77 to 88 (TGTSAKVQQDGA) has biased composition (polar residues). Composition is skewed to basic and acidic residues over residues 115–136 (KSSECTLLEKKNVHSKHDPSEK), 164–174 (KKPDTANEYRK), and 183–238 (VNRD…EKRK). The C2H2-type 1 zinc-finger motif lies at 257–279 (YECNQCGKVLSHKQGLLDHQRTH). The segment at 285-303 (YECYECGIAFSQKSHLVVH) adopts a C2H2-type 2; atypical zinc-finger fold. C2H2-type zinc fingers lie at residues 314–337 (YECVQCGKAHGHKHALTDHLRISH), 343–365 (YKCNECGKTFRHSSNLMQHIRSH), 371–393 (YECKECGKSFRYNSSFTEHVRTH), 399–421 (YECNECGKAFKYGSSLTKHMRIH), 427–449 (FECTECGKTFSKKSHLVIHQRTH), 455–477 (YKCKECGKAFGHSSSLTYHMRTH), 483–505 (FECNKCGKAFKQIEGLTQHQRVH), 511–533 (YECVECGKAFSQKSHLIVHQRTH), 539–561 (FECYECGKAFNAKSQLVIHQRSH), and 570–592 (YECVECGKAFKQNASLTRHMKTH).

This sequence belongs to the krueppel C2H2-type zinc-finger protein family. In terms of tissue distribution, expressed in testes, brain, kidney, spleen, thymus, lung, and at low levels in liver.

It localises to the nucleus. In terms of biological role, may be involved in transcriptional regulation. The polypeptide is Zinc finger protein 37 (Zfp37) (Rattus norvegicus (Rat)).